The following is a 254-amino-acid chain: 5'/3'-nucleotidase SurE (254 aa).

A divalent metal cation is bound by residues aspartate 8, aspartate 9, serine 39, and asparagine 92.

Belongs to the SurE nucleotidase family. A divalent metal cation serves as cofactor.

It is found in the cytoplasm. It carries out the reaction a ribonucleoside 5'-phosphate + H2O = a ribonucleoside + phosphate. The enzyme catalyses a ribonucleoside 3'-phosphate + H2O = a ribonucleoside + phosphate. The catalysed reaction is [phosphate](n) + H2O = [phosphate](n-1) + phosphate + H(+). Functionally, nucleotidase with a broad substrate specificity as it can dephosphorylate various ribo- and deoxyribonucleoside 5'-monophosphates and ribonucleoside 3'-monophosphates with highest affinity to 3'-AMP. Also hydrolyzes polyphosphate (exopolyphosphatase activity) with the preference for short-chain-length substrates (P20-25). Might be involved in the regulation of dNTP and NTP pools, and in the turnover of 3'-mononucleotides produced by numerous intracellular RNases (T1, T2, and F) during the degradation of various RNAs. The sequence is that of 5'/3'-nucleotidase SurE from Edwardsiella ictaluri (strain 93-146).